A 319-amino-acid polypeptide reads, in one-letter code: Taste receptor type 2 member 30 (319 aa).

Met1 is a topological domain (extracellular). A helical transmembrane segment spans residues 2 to 22 (ITFLPIIFSILIVVIFVVGNF). At 23 to 46 (ANGFIALVNSIEWVKRQKISFVDQ) the chain is on the cytoplasmic side. Residues 47–67 (ILTALAVSRVGLLWVLLLHWY) form a helical membrane-spanning segment. The Extracellular portion of the chain corresponds to 68–86 (ATQLNPAFYSVEVRITVYN). The chain crosses the membrane as a helical span at residues 87–107 (VWAVTNHFSSWLATSLSMFYL). The Cytoplasmic portion of the chain corresponds to 108-126 (LKIANFSNLIFLRIKRRVK). The chain crosses the membrane as a helical span at residues 127-147 (SVVLVILLGPLLFLVCHLFVI). The Extracellular segment spans residues 148–178 (NMDETIWTKEYEGNMTWKIKLKSAMYHSNMT). Residues Asn161 and Asn176 are each glycosylated (N-linked (GlcNAc...) asparagine). The helical transmembrane segment at 179 to 199 (LTILANFVPLTLTLISFLLLI) threads the bilayer. Topologically, residues 200–229 (CSLCKHLKKMQLHGKGSQDPSTKVHIKALQ) are cytoplasmic. A helical membrane pass occupies residues 230–250 (TVTSFLLLCAIYFLSMIISVC). Over 251 to 259 (NLGRLQKQP) the chain is Extracellular. A helical transmembrane segment spans residues 260-280 (VFMFCQAIIFSYPSTHPFILI). Topologically, residues 281–319 (LGNKKLKQIFLSVLWHVRYWVKDRSLRLHRFTRAALCKG) are cytoplasmic.

This sequence belongs to the G-protein coupled receptor T2R family.

It is found in the membrane. In terms of biological role, receptor that may play a role in the perception of bitterness and is gustducin-linked. May play a role in sensing the chemical composition of the gastrointestinal content. The activity of this receptor may stimulate alpha gustducin, mediate PLC-beta-2 activation and lead to the gating of TRPM5. In Pan paniscus (Pygmy chimpanzee), this protein is Taste receptor type 2 member 30 (TAS2R30).